The chain runs to 130 residues: Small ribosomal subunit protein uS8 (130 aa).

The protein belongs to the universal ribosomal protein uS8 family. In terms of assembly, part of the 30S ribosomal subunit.

Functionally, one of the primary rRNA binding proteins, it binds directly to 16S rRNA central domain where it helps coordinate assembly of the platform of the 30S subunit. This is Small ribosomal subunit protein uS8 from Methanococcus maripaludis (strain C6 / ATCC BAA-1332).